Reading from the N-terminus, the 468-residue chain is Transcription factor ste11 (468 aa).

A disordered region spans residues 1 to 21; it reads MSASLTAEQKDQKSSVKRPLN. A DNA-binding region (HMG box) is located at residues 16 to 80; that stretch reads VKRPLNSFML…KHMLENPEYK (65 aa). Thr173 bears the Phosphothreonine mark. Phosphoserine is present on residues Ser209, Ser211, and Ser218. Polar residues-rich tracts occupy residues 249–263 and 274–285; these read PSLE…SNCS and GTVSEQSNSDSP. The tract at residues 249-290 is disordered; that stretch reads PSLEANLPQNSSNCSARRVPKFDSKGTVSEQSNSDSPELSAD.

Post-translationally, phosphorylation results in inactivation.

The protein resides in the nucleus. It is found in the cytoplasm. In terms of biological role, key transcription factor for sexual development. Activates the transcription of the matp, matm, mei2, mfm, ste6 and rgs1 genes. Binds specifically to a DNA fragment carrying a 10-base motif 5'-TTCTTTGTTY-3'. The protein is Transcription factor ste11 (ste11) of Schizosaccharomyces pombe (strain 972 / ATCC 24843) (Fission yeast).